Reading from the N-terminus, the 585-residue chain is Urease subunit alpha (585 aa).

The Urease domain occupies 132–585 (GGIDTHIHFI…LPMAQRYFLF (454 aa)). 3 residues coordinate Ni(2+): histidine 137, histidine 139, and lysine 220. An N6-carboxylysine modification is found at lysine 220. Histidine 222 serves as a coordination point for substrate. Histidine 249 and histidine 275 together coordinate Ni(2+). Histidine 323 functions as the Proton donor in the catalytic mechanism. A Ni(2+)-binding site is contributed by aspartate 363.

The protein belongs to the metallo-dependent hydrolases superfamily. Urease alpha subunit family. Heterotrimer of UreA (gamma), UreB (beta) and UreC (alpha) subunits. Three heterotrimers associate to form the active enzyme. Ni cation is required as a cofactor. In terms of processing, carboxylation allows a single lysine to coordinate two nickel ions.

The protein resides in the cytoplasm. It carries out the reaction urea + 2 H2O + H(+) = hydrogencarbonate + 2 NH4(+). Its pathway is nitrogen metabolism; urea degradation; CO(2) and NH(3) from urea (urease route): step 1/1. The sequence is that of Urease subunit alpha from Pseudarthrobacter chlorophenolicus (strain ATCC 700700 / DSM 12829 / CIP 107037 / JCM 12360 / KCTC 9906 / NCIMB 13794 / A6) (Arthrobacter chlorophenolicus).